Here is an 883-residue protein sequence, read N- to C-terminus: Pre-mRNA-splicing factor syf1 homolog (883 aa).

HAT repeat units lie at residues 13–45 (INFEVEDVPYEEEILRNAYSVKHWLRYIDHKAK), 46–78 (APNNGVNMVYERALKELPGSYKIWHNYLRTRRK), 88–120 (PMYEEVNSAFERALVFMHKMPRIWMDYGAFMTS), 122–156 (CKITRTRHVFDRALRALPITQHGRIWPLYLQFVRR), 158–190 (EMPETALRVYRRYLKLFPEDTEEYVDYLQEADR), 268–303 (GLFDRARDIYEEAIQTVTTVRDFTQVFDEYAQFEEL), 368–406 (DKPAEIISTYTEAVQTVQPKQAVGKLHTLWVEFAKFYEA), 463–495 (KRKIAYYDDTETVQARLHRSLKVWSMYADLEES), 531–565 (NYFEEAYRAYEKGISLFKWPNVYDIWNSYLTKFLE), 570–604 (TKLERARDLFEQCLDQCPPEHAKYFYLLYAKLEEE), 642–676 (YGLPRTREIYEKAIESLPEQNMRHMCVKFAELETK), and 678–712 (GEVDRARAIYAHCSQVCDPRITADFWQTWKEFEVR). Disordered stretches follow at residues 794–851 (RGET…DEEG) and 864–883 (IPAKVFGSLKPSNQGDSDGE). Residues 812–834 (DEIDIGDSDEDDEEEDDDEENEM) are compositionally biased toward acidic residues. 2 stretches are compositionally biased toward polar residues: residues 835 to 844 (TNENQASAAV) and 873 to 883 (KPSNQGDSDGE).

It belongs to the crooked-neck family. In terms of assembly, component of the NTC(Nineteen)/Prp19 complex composed of at least fand, Prp19,CG9667/ISY1 and Cdc5/CDC5L. Within the complex, interacts with Prp19 and ISY1/CG9667.

The protein localises to the nucleus. Its function is as follows. Subunit of the NTC(Nineteen)/Prp19 complex, which is part of the spliceosome. The complex participates in spliceosome assembly, its remodeling and is required for efficient spliceosome activation. Essential for efficient pre-mRNA splicing. In embryos, efficient pre-mRNA splicing of zygotic transcripts is essential during dynamic cellular processes that require rapid division and/or dramatic changes in gene expression such as blastoderm cellularization, tracheal branching morphogenesis, Malpighian morphogenesis and epidermal development. Part of its role in promoting embryo tracheal development is also due to specifically splicing bnl transcripts which results in the activation of the BNL-FGF pathway. The protein is Pre-mRNA-splicing factor syf1 homolog of Drosophila melanogaster (Fruit fly).